We begin with the raw amino-acid sequence, 236 residues long: Ascorbate-specific transmembrane electron transporter 1 (236 aa).

The Cytoplasmic portion of the chain corresponds to 1 to 11; that stretch reads MGLGLGVRAAP. A helical transmembrane segment spans residues 12-32; it reads FTYAAHALAVAAAAMVLVWSI. Residues 15-219 form the Cytochrome b561 domain; the sequence is AAHALAVAAA…FGASVVVAAI (205 aa). Residues 33–50 are Extracellular-facing; sequence QFRGGLAIESTNKNLIFN. A helical transmembrane segment spans residues 51-71; it reads VHPVLMLIGYVIIGGEAIMVY. H52 contacts heme b. Residue 67 to 75 coordinates L-ascorbate; that stretch reads AIMVYRVLP. The Cytoplasmic segment spans residues 72-84; the sequence is RVLPTSNHDTTKL. A helical membrane pass occupies residues 85 to 105; that stretch reads IHLILHGIALVLGAVGIYFAF. H86 and H120 together coordinate heme b. The Extracellular portion of the chain corresponds to 106–122; the sequence is KNHNESGIANLYSLHSW. Residue 116-125 coordinates monodehydro-L-ascorbate radical; that stretch reads LYSLHSWIGI. The helical transmembrane segment at 123 to 143 threads the bilayer; the sequence is IGIGTITLYGIQWIIGFVTFF. The Cytoplasmic segment spans residues 144-153; that stretch reads FPGAAPNVKK. Residues 154-174 traverse the membrane as a helical segment; the sequence is GVLPWHVLFGLFVYILALANA. Residue H159 coordinates heme b. Over 175 to 201 the chain is Extracellular; that stretch reads ELGFLEKLTFLESSGLDKYGTEAFLVN. A helical transmembrane segment spans residues 202–222; sequence FTALVVVLFGASVVVAAIAPV. At 223 to 236 the chain is on the cytoplasmic side; the sequence is RLEEPQGYDPIPEN.

Heme b serves as cofactor.

The protein localises to the membrane. Its activity is regulated as follows. Inhibited by diethylpyrocarbonate. Functionally, two-heme-containing cytochrome. Catalyzes ascorbate-dependent trans-membrane electron transfer by utilizing a concerted H(+)/e(-) transfer mechanism. The chain is Ascorbate-specific transmembrane electron transporter 1 (ZCYB) from Zea mays (Maize).